Reading from the N-terminus, the 582-residue chain is Potassium voltage-gated channel subfamily KQT member 1 (582 aa).

The Cytoplasmic portion of the chain corresponds to 1 to 31 (RVSIYSARRPLLARTHIQGRVYNFLERPTGW). The helical transmembrane segment at 32-53 (KCFVYHFAVFLIVLVCLIFSVL) threads the bilayer. Residues 54 to 64 (STIEQYVALAT) lie on the Extracellular side of the membrane. Residues 65–87 (GTLFWMEIVLVVFFGTEYVVRLW) traverse the membrane as a helical segment. Residues 88–103 (SAGCRSKYVGVWGRLR) are Cytoplasmic-facing. The helical transmembrane segment at 104–129 (FARKPISIIDLIVVLASMVVLCVGSK) threads the bilayer. The Extracellular portion of the chain corresponds to 130–137 (GQVFATSA). A helical; Voltage-sensor membrane pass occupies residues 138–153 (IRGIRFLQILRMLHVD). Positions 149-157 (MLHVDRQGG) are interaction with KCNE3. The Cytoplasmic portion of the chain corresponds to 154 to 171 (RQGGTWRLLGSVVFIHRQ). Position 155 (Q155) interacts with a 1,2-diacyl-sn-glycero-3-phospho-(1D-myo-inositol-4,5-bisphosphate). Residues 172–194 (ELITTLYIGFLGLIFSSYFVYLA) form a helical membrane-spanning segment. Topologically, residues 195–210 (EKDAVNESGQVEFGSY) are extracellular. A glycan (N-linked (GlcNAc...) asparagine) is linked at N200. Residues 211–231 (ADALWWGVVTVTTIGYGDKVP) constitute an intramembrane region (pore-forming). Residues 232-233 (QT) are Extracellular-facing. Residues 234-259 (WVGKTIASCFSVFAISFFALPAGILG) form a helical membrane-spanning segment. The Cytoplasmic portion of the chain corresponds to 260-582 (SGFALKVQQK…VPRRGPEEGS (323 aa)). The interaction with CALM stretch occupies residues 281 to 293 (AAASLIQTAWRCY). Phosphoserine occurs at positions 318 and 320. The interval 426 to 440 (KVIRRMQYFVAKKKF) is interaction with CALM; calcium-dependent. The interval 446-483 (PYDVRDVIEQYSQGHLNLMVRIKELQRRLDQSIGKPSL) is interaction with KCNE1 C-terminus. Residues 496 to 532 (SNTIGARLNRVEDKVAQLDQRLVLITDMLQQLLSLHH) are a coiled coil. An interaction with AKAP9 region spans residues 499–527 (IGARLNRVEDKVAQLDQRLVLITDMLQQL). The interval 500–531 (GARLNRVEDKVAQLDQRLVLITDMLQQLLSLH) is C-terminal assembly domain (tetramerization). The segment at 530–582 (LHHGGPPGSRPPSGGGAQVQPCGPTNPELFLPGNALPTYEQLTVPRRGPEEGS) is disordered.

This sequence belongs to the potassium channel family. KQT (TC 1.A.1.15) subfamily. Kv7.1/KCNQ1 sub-subfamily. As to quaternary structure, tetramer. Heterotetramer with KCNE1; targets to the membrane raft. Interacts (via C-terminus) with CALM; forms a heterooctameric structure (with 4:4 KCNQ1:CALM stoichiometry) in a calcium-independent manner. Interacts with AKAP9; targets protein kinase A (PKA) catalytic and regulatory subunits and protein phosphatase 1 (PP1) to the KCNQ1-KCNE1 complex, allowing PKA-mediated phosphorylation and increase of delayed rectifier potassium channel activity. Interacts with KCNE2; form a heterooligomer complex that targets to the membrane raft and leading to currents with an apparently instantaneous activation, a rapid deactivation process and a linear current-voltage relationship and decreases the amplitude of the outward current. Interacts with AP2M1; mediates estrogen-induced internalization via clathrin-coated vesicles. Interacts with NEDD4L; promotes internalization and decreases I(Ks) currents. Interacts with USP2; counteracts the NEDD4L-specific down-regulation of I(Ks) and restore plasma membrane localization. Heterotetramer with KCNQ5; has a voltage-gated potassium channel activity. Interacts with KCNE3; four KCNE3 molecules are bound to one KCNQ1 tetramer (4:4 KCNQ1:KCNE3 stoichiometry); alters membrane raft localization; affects KCNQ1 structure and gating properties. Interacts with KCNE4; impairs KCNQ1 localization in lipid rafts and inhibits voltage-gated potassium channel activity. Interacts with KCNE5; impairs KCNQ1 localization in lipid rafts and only conducts current upon strong and continued depolarization. Post-translationally, phosphorylated by PKA; increases delayed rectifier potassium channel activity of the KCNQ1-KCNE1 complex through a macromolecular complex that includes PKA, PP1, and the targeting protein AKAP9. Ubiquitinated by NEDD4L; promotes internalization. The ubiquitinylated form is internalized through a clathrin-mediated endocytosis by interacting with AP2M1 and is recycled back to the cell membrane via RAB4A and RAB11A. In terms of processing, deubiquitinated by USP2; counteracts the NEDD4L-specific down-regulation of I(Ks) and restores the membrane localization.

Its subcellular location is the cell membrane. The protein resides in the cytoplasmic vesicle membrane. The protein localises to the early endosome. It localises to the membrane raft. It is found in the endoplasmic reticulum. Its subcellular location is the basolateral cell membrane. The catalysed reaction is K(+)(in) = K(+)(out). PIP2 molecule is essential to activate KCNQ channels by inducing the coupling of the voltage-sensing domain (VSD) and the pore-forming domain (PD). Upon channel activation, PIP2 disrupts the VSD-calmodulin/CALM interactions, causing the release of CALM from the VSD which triggers the opening of the gate. Calcium potentiates KCNQ1 channel current through calcium-bound CALM. Calcium-bound CALM competes with PIP2 to stabilize the channel open state. Functionally, pore-forming subunit of the voltage-gated potassium (Kv) channel involved in the regulation of cardiomyocyte excitability and important in normal development and functions of myocardium, inner ear, stomach and colon. Associates with KCNE beta subunits that modulates current kinetics. Induces a voltage-dependent by rapidly activating and slowly deactivating potassium-selective outward current. Also promotes a delayed voltage activated potassium current showing outward rectification characteristic. During beta-adrenergic receptor stimulation participates in cardiac repolarization by associating with KCNE1 to form the I(Ks) cardiac potassium current that increases the amplitude and slows down the activation kinetics of outward potassium current I(Ks). Muscarinic agonist oxotremorine-M strongly suppresses KCNQ1/KCNE1 current. When associated with KCNE3, forms the potassium channel that is important for cyclic AMP-stimulated intestinal secretion of chloride ions. This interaction with KCNE3 is reduced by 17beta-estradiol, resulting in the reduction of currents. During conditions of increased substrate load, maintains the driving force for proximal tubular and intestinal sodium ions absorption, gastric acid secretion, and cAMP-induced jejunal chloride ions secretion. Allows the provision of potassium ions to the luminal membrane of the secretory canaliculus in the resting state as well as during stimulated acid secretion. When associated with KCNE2, forms a heterooligomer complex leading to currents with an apparently instantaneous activation, a rapid deactivation process and a linear current-voltage relationship and decreases the amplitude of the outward current. When associated with KCNE4, inhibits voltage-gated potassium channel activity. When associated with KCNE5, this complex only conducts current upon strong and continued depolarization. Also forms a heterotetramer with KCNQ5 that has a voltage-gated potassium channel activity. Binds with phosphatidylinositol 4,5-bisphosphate. This is Potassium voltage-gated channel subfamily KQT member 1 from Felis catus (Cat).